Reading from the N-terminus, the 245-residue chain is Ribonuclease 3 (245 aa).

The region spanning 19 to 148 (FKVFQEKIGI…FIGALYLDQG (130 aa)) is the RNase III domain. Glutamate 61 provides a ligand contact to Mg(2+). Aspartate 65 is a catalytic residue. Aspartate 134 and glutamate 137 together coordinate Mg(2+). Glutamate 137 is a catalytic residue. A DRBM domain is found at 174 to 243 (DYKSQLQELI…AAEALKKLKE (70 aa)).

This sequence belongs to the ribonuclease III family. As to quaternary structure, homodimer. It depends on Mg(2+) as a cofactor.

The protein resides in the cytoplasm. The enzyme catalyses Endonucleolytic cleavage to 5'-phosphomonoester.. In terms of biological role, digests double-stranded RNA. Involved in the processing of primary rRNA transcript to yield the immediate precursors to the large and small rRNAs (23S and 16S). Processes some mRNAs, and tRNAs when they are encoded in the rRNA operon. Processes pre-crRNA and tracrRNA of type II CRISPR loci if present in the organism. The polypeptide is Ribonuclease 3 (Bacillus cereus (strain AH187)).